Here is a 97-residue protein sequence, read N- to C-terminus: RxLR effector protein PexRD21 (97 aa).

A signal peptide spans 1 to 21 (MRLSYILVVVIAVTLQACVCA). Positions 48 to 66 (RLLRGVKKRTAEREVQEER) match the RxLR-dEER motif.

The protein belongs to the RxLR effector family.

It localises to the secreted. Its subcellular location is the host cell membrane. In terms of biological role, effector that is involved in host plant infection. Contributes to virulence during the early infection stage, by inhibiting plant defense responses induced by both PAMP-triggered immunity (PTI) and effector-triggered immunity (ETI). The polypeptide is RxLR effector protein PexRD21 (Phytophthora infestans (strain T30-4) (Potato late blight agent)).